Reading from the N-terminus, the 773-residue chain is Carnitine O-palmitoyltransferase 1, liver isoform (773 aa).

The residue at position 2 (Ala2) is an N-acetylalanine. The Cytoplasmic segment spans residues 2–47 (AEAHQAVAFQFTVTPDGIDLRLSHEALRQIYLSGLHSWKKKFIRFK). The chain crosses the membrane as a helical span at residues 48-73 (NGIITGVYPASPSSWLIVVVGVMTTM). Topologically, residues 74 to 102 (YAKIDPSLGIIAKINRTLETANCMSSQTK) are mitochondrial intermembrane. The helical transmembrane segment at 103–122 (NVVSGVLFGTGLWVALIVTM) threads the bilayer. The Cytoplasmic segment spans residues 123–773 (RYSLKVLLSY…LFGLSSNSKK (651 aa)). Tyr282 carries the 3'-nitrotyrosine modification. Catalysis depends on His473, which acts as the Proton acceptor. CoA is bound at residue 555–567 (GKGIIKKCRTSPD). Thr588 carries the phosphothreonine modification. Tyr589 is modified (3'-nitrotyrosine). (R)-carnitine is bound by residues Tyr589 and Thr602. Thr604 is modified (phosphothreonine). A phosphoserine mark is found at Ser741 and Ser747.

Belongs to the carnitine/choline acetyltransferase family. As to quaternary structure, homohexamer and homotrimer. Identified in a complex that contains at least CPT1A, ACSL1 and VDAC1. Also identified in complexes with ACSL1 and VDAC2 and VDAC3. Interacts with ZDHHC4. As to expression, strong expression in kidney and heart, and lower in liver and skeletal muscle.

It is found in the mitochondrion outer membrane. It carries out the reaction (R)-carnitine + hexadecanoyl-CoA = O-hexadecanoyl-(R)-carnitine + CoA. The enzyme catalyses succinyl-CoA + L-lysyl-[protein] = N(6)-succinyl-L-lysyl-[protein] + CoA + H(+). It functions in the pathway lipid metabolism; fatty acid beta-oxidation. Its activity is regulated as follows. Inhibited by malonyl-CoA. Its function is as follows. Catalyzes the transfer of the acyl group of long-chain fatty acid-CoA conjugates onto carnitine, an essential step for the mitochondrial uptake of long-chain fatty acids and their subsequent beta-oxidation in the mitochondrion. Also possesses a lysine succinyltransferase activity that can regulate enzymatic activity of substrate proteins such as ENO1 and metabolism independent of its classical carnitine O-palmitoyltransferase activity. Plays an important role in hepatic triglyceride metabolism. Also plays a role in inducible regulatory T-cell (iTreg) differentiation once activated by butyryl-CoA that antagonizes malonyl-CoA-mediated CPT1A repression. Sustains the IFN-I response by recruiting ZDHCC4 to palmitoylate MAVS at the mitochondria leading to MAVS stabilization and activation. Promotes ROS-induced oxidative stress in liver injury via modulation of NFE2L2 and NLRP3-mediated signaling pathways. This chain is Carnitine O-palmitoyltransferase 1, liver isoform, found in Homo sapiens (Human).